The following is a 44-amino-acid chain: Large ribosomal subunit protein bL34 (44 aa).

A disordered region spans residues 21–44 (RMDTSGGRRILSARRRKGRKTISA). The span at 31 to 44 (LSARRRKGRKTISA) shows a compositional bias: basic residues.

Belongs to the bacterial ribosomal protein bL34 family.

In Endomicrobium trichonymphae, this protein is Large ribosomal subunit protein bL34.